A 200-amino-acid polypeptide reads, in one-letter code: Pre-mRNA cleavage factor Im 25 kDa subunit 2 (200 aa).

One can recognise a Nudix hydrolase domain in the interval Gly-45–Leu-172. The tract at residues Thr-72–Cys-74 is interaction with RNA. The Nudix box motif lies at Gly-79–Gly-100.

Belongs to the Nudix hydrolase family. CPSF5 subfamily. In terms of assembly, homodimer. Component of the cleavage factor Im (CFIm) complex. Forms a complex with cleavage and polyadenylation specificity factor (CPSF) subunits FIPS5, PAPS4 and CPSF30.

It is found in the nucleus. Component of the cleavage factor Im (CFIm) complex that plays a key role in pre-mRNA 3'-processing. Involved in association with CPSF6 or CPSF7 in pre-MRNA 3'-end poly(A) site cleavage and poly(A) addition. NUDT21/CPSF5 binds to cleavage and polyadenylation RNA substrates. The homodimer mediates simultaneous sequence-specific recognition of two 5'-UGUA-3' elements within the pre-mRNA. Binds to, but does not hydrolyze mono- and di-adenosine nucleotides. May have a role in mRNA export. The polypeptide is Pre-mRNA cleavage factor Im 25 kDa subunit 2 (Arabidopsis thaliana (Mouse-ear cress)).